The sequence spans 231 residues: 2-C-methyl-D-erythritol 4-phosphate cytidylyltransferase (231 aa).

It belongs to the IspD/TarI cytidylyltransferase family. IspD subfamily.

It carries out the reaction 2-C-methyl-D-erythritol 4-phosphate + CTP + H(+) = 4-CDP-2-C-methyl-D-erythritol + diphosphate. The protein operates within isoprenoid biosynthesis; isopentenyl diphosphate biosynthesis via DXP pathway; isopentenyl diphosphate from 1-deoxy-D-xylulose 5-phosphate: step 2/6. Catalyzes the formation of 4-diphosphocytidyl-2-C-methyl-D-erythritol from CTP and 2-C-methyl-D-erythritol 4-phosphate (MEP). The chain is 2-C-methyl-D-erythritol 4-phosphate cytidylyltransferase from Mycobacterium bovis (strain BCG / Pasteur 1173P2).